A 513-amino-acid polypeptide reads, in one-letter code: MQLNSTEISELIKQRIAQFNVVSEAHNEGTIVSVSDGVIRIHGLADCMQGEMISLPGNRYAIALNLERDSVGAVVMGPYADLAEGMKVKCTGRILEVPVGRGLLGRVVNTLGAPIDGKGPVEHDGFSAVEAIAPGVIERQSVDQPVQTGYKAVDSMIPIGRGQRELIIGDRQTGKTALAIDAIINQRDSGIKCVYVAIGQKASTISNVVRKLEEHGALQNTIVVVATASESAALQYLAPYAGCAMGEYFRDRGEDALIIYDDLSKQAVAYRQISLLLRRPPGREAFPGDVFYLHSRLLERAARVNVEYVEAFTKGEVKGKTGSLTALPIIETQAGDVSAFVPTNVISITDGQIFLETNLFNSGIRPAVNPGISVSRVGGAAQTKIMKKLSGGIRTALAQYRELAAFSQFASDLDDATRKQLDHGQKVTELLKQKQYAPMSVAQQSLVLFAAERGYLADVELAKIGSFEAALLAYVDRDHAPLMQEINQSGGYNDEIEGKLKGILDSFKATQSW.

169 to 176 (GDRQTGKT) contacts ATP.

It belongs to the ATPase alpha/beta chains family. In terms of assembly, F-type ATPases have 2 components, CF(1) - the catalytic core - and CF(0) - the membrane proton channel. CF(1) has five subunits: alpha(3), beta(3), gamma(1), delta(1), epsilon(1). CF(0) has three main subunits: a(1), b(2) and c(9-12). The alpha and beta chains form an alternating ring which encloses part of the gamma chain. CF(1) is attached to CF(0) by a central stalk formed by the gamma and epsilon chains, while a peripheral stalk is formed by the delta and b chains.

It is found in the cell inner membrane. The catalysed reaction is ATP + H2O + 4 H(+)(in) = ADP + phosphate + 5 H(+)(out). Its function is as follows. Produces ATP from ADP in the presence of a proton gradient across the membrane. The alpha chain is a regulatory subunit. The chain is ATP synthase subunit alpha from Citrobacter koseri (strain ATCC BAA-895 / CDC 4225-83 / SGSC4696).